Consider the following 378-residue polypeptide: 1-acyl-sn-glycerol-3-phosphate acyltransferase delta (378 aa).

Residues 11–31 (FLCHLIFCYVFIVSGLIINTI) form a helical membrane-spanning segment. Residues 96–101 (HKFEID) carry the HXXXXD motif motif. The next 3 membrane-spanning stretches (helical) occupy residues 125–145 (ELAY…VFCT), 307–327 (TLVN…RFVI), and 338–358 (LASF…MIGV).

It belongs to the 1-acyl-sn-glycerol-3-phosphate acyltransferase family.

Its subcellular location is the endoplasmic reticulum membrane. The catalysed reaction is a 1-acyl-sn-glycero-3-phosphate + an acyl-CoA = a 1,2-diacyl-sn-glycero-3-phosphate + CoA. It carries out the reaction (4Z,7Z,10Z,13Z,16Z,19Z)-docosahexaenoyl-CoA + 1-hexadecanoyl-sn-glycero-3-phosphate = 1-hexadecanoyl-2-(4Z,7Z,10Z,13Z,16Z,19Z-docosahexaenoyl)-sn-glycero-3-phosphate + CoA. It catalyses the reaction 1-octadecanoyl-sn-glycero-3-phosphate + (9Z,12Z)-octadecadienoyl-CoA = 1-octadecanoyl-2-(9Z,12Z-octadecadienoyl)-sn-glycero-3-phosphate + CoA. The enzyme catalyses 1-octadecanoyl-sn-glycero-3-phosphate + (4Z,7Z,10Z,13Z,16Z,19Z)-docosahexaenoyl-CoA = 1-octadecanoyl-2-(4Z,7Z,10Z,13Z,16Z,19Z-docosahexaenoyl)-sn-glycero-3-phosphate + CoA. The catalysed reaction is (4Z,7Z,10Z,13Z,16Z,19Z)-docosahexaenoyl-CoA + 1-(9Z-octadecenoyl)-sn-glycero-3-phosphate = 1-(9Z-octadecenoyl)-2-(4Z,7Z,10Z,13Z,16Z,19Z-docosahexaenoyl)-sn-glycero-3-phosphate + CoA. It participates in phospholipid metabolism; CDP-diacylglycerol biosynthesis; CDP-diacylglycerol from sn-glycerol 3-phosphate: step 2/3. Functionally, converts 1-acyl-sn-glycerol-3-phosphate (lysophosphatidic acid or LPA) into 1,2-diacyl-sn-glycerol-3-phosphate (phosphatidic acid or PA) by incorporating an acyl moiety at the sn-2 position of the glycerol backbone. Exhibits high acyl-CoA specificity for polyunsaturated fatty acyl-CoA, especially docosahexaenoyl-CoA (22:6-CoA, DHA-CoA). The polypeptide is 1-acyl-sn-glycerol-3-phosphate acyltransferase delta (AGPAT4) (Bos taurus (Bovine)).